Reading from the N-terminus, the 297-residue chain is Putative phosphate permease MJ0630 (297 aa).

A run of 9 helical transmembrane segments spans residues 2–22, 45–65, 67–87, 99–119, 121–141, 154–174, 180–200, 225–245, and 274–294; these read ITIE…LFIL, LLIL…NVGS, VNSL…VMTL, TVII…YVFG, ILLS…ILYS, ITMI…NLGS, VLGT…FLCL, FIAQ…GMPV, and NIIF…FIIN.

Belongs to the inorganic phosphate transporter (PiT) (TC 2.A.20) family.

The protein localises to the cell membrane. Its function is as follows. Potential transporter for phosphate. The sequence is that of Putative phosphate permease MJ0630 from Methanocaldococcus jannaschii (strain ATCC 43067 / DSM 2661 / JAL-1 / JCM 10045 / NBRC 100440) (Methanococcus jannaschii).